We begin with the raw amino-acid sequence, 625 residues long: tRNA uridine 5-carboxymethylaminomethyl modification enzyme MnmG (625 aa).

FAD-binding positions include G11–G16, V123, and S178. Residue G271–F285 participates in NAD(+) binding. Q368 contacts FAD.

This sequence belongs to the MnmG family. In terms of assembly, homodimer. Heterotetramer of two MnmE and two MnmG subunits. The cofactor is FAD.

The protein localises to the cytoplasm. Functionally, NAD-binding protein involved in the addition of a carboxymethylaminomethyl (cmnm) group at the wobble position (U34) of certain tRNAs, forming tRNA-cmnm(5)s(2)U34. The chain is tRNA uridine 5-carboxymethylaminomethyl modification enzyme MnmG from Bacteroides fragilis (strain ATCC 25285 / DSM 2151 / CCUG 4856 / JCM 11019 / LMG 10263 / NCTC 9343 / Onslow / VPI 2553 / EN-2).